Reading from the N-terminus, the 492-residue chain is Heat shock factor protein 4 (492 aa).

The DNA-binding element occupies 17-121 (VPAFLGKLWA…QLLERVRRKV (105 aa)). The segment at 129–203 (GRWRPEDLGR…GPLQAGPSNA (75 aa)) is hydrophobic repeat HR-A/B. The interactions with DUSP26, MAPK1 and MAPK2 stretch occupies residues 245-322 (LPETNLGLSP…ECDFCVTAPP (78 aa)). Residues 246 to 285 (PETNLGLSPHRARGPIISDIPEDSPSPEGTRLSPSSDGRR) are disordered. A Glycyl lysine isopeptide (Lys-Gly) (interchain with G-Cter in SUMO) cross-link involves residue lysine 293. Serine 298 is modified (phosphoserine). Residues 337 to 400 (GSFSPEGPRN…PAGPLDVLGP (64 aa)) form a disordered region. Residues 364–389 (LGLESGDRSPESLLPPMLLQPPQESV) form a hydrophobic repeat HR-C region. Over residues 374 to 388 (ESLLPPMLLQPPQES) the composition is skewed to low complexity.

It belongs to the HSF family. As to quaternary structure, homotrimer. Exhibits constitutive DNA binding and forms trimers even in the absence of stress. Interacts with ALKBH4, DUSP26, MAPK1, MAPK2, MAPK8 and MAP kinase p38. In terms of processing, phosphorylated mainly on serine residues. Phosphorylation on Ser-298 promotes sumoylation on Lys-293. Post-translationally, isoform HSF4B is constitutively sumoylated. Sumoylation represses the transcriptional activity and is promoted by phosphorylation on Ser-298. HSFA is not sumoylated. Expressed in heart, skeletal muscle, eye and brain, and at much lower levels in some other tissues.

The protein resides in the nucleus. Its function is as follows. Heat-shock transcription factor that specifically binds heat shock promoter elements (HSE). Required for denucleation and organelle rupture and degradation that occur during eye lens terminal differentiation, when fiber cells that compose the lens degrade all membrane-bound organelles in order to provide lens with transparency to allow the passage of light. In this process, may regulate denucleation of lens fiber cells in part by activating DNASE2B transcription. May be involved in DNA repair through the transcriptional regulation of RAD51. May up-regulate p53/TP53 protein in eye lens fiber cells, possibly through protein stabilization. In the eye lens, controls the expression of alpha-crystallin B chain/CRYAB and consequently may be involved in the regulation of lysosomal acidification. Transcriptional repressor. In terms of biological role, transcriptional activator. The sequence is that of Heat shock factor protein 4 (HSF4) from Homo sapiens (Human).